The chain runs to 948 residues: Bifunctional glutamine synthetase adenylyltransferase/adenylyl-removing enzyme (948 aa).

Residues 1–447 (MLTPDNKLMS…EFQQVVGAES (447 aa)) form an adenylyl removase region. The tract at residues 453–948 (EQGLQVLWQD…NCWNHLLEDD (496 aa)) is adenylyl transferase.

It belongs to the GlnE family. Requires Mg(2+) as cofactor.

The enzyme catalyses [glutamine synthetase]-O(4)-(5'-adenylyl)-L-tyrosine + phosphate = [glutamine synthetase]-L-tyrosine + ADP. It carries out the reaction [glutamine synthetase]-L-tyrosine + ATP = [glutamine synthetase]-O(4)-(5'-adenylyl)-L-tyrosine + diphosphate. Involved in the regulation of glutamine synthetase GlnA, a key enzyme in the process to assimilate ammonia. When cellular nitrogen levels are high, the C-terminal adenylyl transferase (AT) inactivates GlnA by covalent transfer of an adenylyl group from ATP to specific tyrosine residue of GlnA, thus reducing its activity. Conversely, when nitrogen levels are low, the N-terminal adenylyl removase (AR) activates GlnA by removing the adenylyl group by phosphorolysis, increasing its activity. The regulatory region of GlnE binds the signal transduction protein PII (GlnB) which indicates the nitrogen status of the cell. The polypeptide is Bifunctional glutamine synthetase adenylyltransferase/adenylyl-removing enzyme (Idiomarina loihiensis (strain ATCC BAA-735 / DSM 15497 / L2-TR)).